Consider the following 83-residue polypeptide: Small ribosomal subunit protein bS16 (83 aa).

This sequence belongs to the bacterial ribosomal protein bS16 family.

This chain is Small ribosomal subunit protein bS16, found in Shewanella denitrificans (strain OS217 / ATCC BAA-1090 / DSM 15013).